The following is a 456-amino-acid chain: Heme sensor protein HssS (456 aa).

Helical transmembrane passes span 9-29 and 164-184; these read IAIY…LFAN and TFLA…VIAS. One can recognise an HAMP domain in the interval 186–238; sequence YSIIKPIKILKQATERLMHGDFNSPIYQSRHDEIGTLQYRFEAMRQSLKQVDD. The region spanning 246–456 is the Histidine kinase domain; that stretch reads NVSHEIKTPL…TFTVTLPETN (211 aa). His249 is subject to Phosphohistidine; by autocatalysis.

In terms of processing, autophosphorylated.

The protein resides in the cell membrane. The catalysed reaction is ATP + protein L-histidine = ADP + protein N-phospho-L-histidine.. Functionally, member of the two-component regulatory system HssS/HssR involved in intracellular heme homeostasis and tempering of staphylococcal virulence. HssS functions as a heme sensor histidine kinase which is autophosphorylated at a histidine residue and transfers its phosphate group to an aspartate residue of HssR. HssR/HssS activates the expression of hrtAB, an efflux pump, in response to extracellular heme, hemin, hemoglobin or blood. This is Heme sensor protein HssS (hssS) from Staphylococcus haemolyticus (strain JCSC1435).